The sequence spans 194 residues: Protein GrpE (194 aa).

The tract at residues 1 to 39 (MTNHEQDQQDNSELLDDDQVTLESQQAADSGAEAPASDD) is disordered. Over residues 8-20 (QQDNSELLDDDQV) the composition is skewed to acidic residues.

This sequence belongs to the GrpE family. Homodimer.

It localises to the cytoplasm. In terms of biological role, participates actively in the response to hyperosmotic and heat shock by preventing the aggregation of stress-denatured proteins, in association with DnaK and GrpE. It is the nucleotide exchange factor for DnaK and may function as a thermosensor. Unfolded proteins bind initially to DnaJ; upon interaction with the DnaJ-bound protein, DnaK hydrolyzes its bound ATP, resulting in the formation of a stable complex. GrpE releases ADP from DnaK; ATP binding to DnaK triggers the release of the substrate protein, thus completing the reaction cycle. Several rounds of ATP-dependent interactions between DnaJ, DnaK and GrpE are required for fully efficient folding. This is Protein GrpE from Saccharophagus degradans (strain 2-40 / ATCC 43961 / DSM 17024).